The primary structure comprises 35 residues: Photosystem II reaction center protein T (35 aa).

Residues 3–23 traverse the membrane as a helical segment; the sequence is ALVYTFLLVGTLGIIFFAIFF.

It belongs to the PsbT family. As to quaternary structure, PSII is composed of 1 copy each of membrane proteins PsbA, PsbB, PsbC, PsbD, PsbE, PsbF, PsbH, PsbI, PsbJ, PsbK, PsbL, PsbM, PsbT, PsbY, PsbZ, Psb30/Ycf12, at least 3 peripheral proteins of the oxygen-evolving complex and a large number of cofactors. It forms dimeric complexes.

Its subcellular location is the plastid. The protein localises to the chloroplast thylakoid membrane. Its function is as follows. Found at the monomer-monomer interface of the photosystem II (PS II) dimer, plays a role in assembly and dimerization of PSII. PSII is a light-driven water plastoquinone oxidoreductase, using light energy to abstract electrons from H(2)O, generating a proton gradient subsequently used for ATP formation. This is Photosystem II reaction center protein T from Chara vulgaris (Common stonewort).